Here is a 317-residue protein sequence, read N- to C-terminus: Pyridoxal 5'-phosphate synthase subunit PdxS (317 aa).

A D-ribose 5-phosphate-binding site is contributed by D47. The active-site Schiff-base intermediate with D-ribose 5-phosphate is K104. D-ribose 5-phosphate is bound at residue G176. R188 serves as a coordination point for D-glyceraldehyde 3-phosphate. Residues G237 and G258–S259 contribute to the D-ribose 5-phosphate site.

The protein belongs to the PdxS/SNZ family. In the presence of PdxT, forms a dodecamer of heterodimers.

The catalysed reaction is aldehydo-D-ribose 5-phosphate + D-glyceraldehyde 3-phosphate + L-glutamine = pyridoxal 5'-phosphate + L-glutamate + phosphate + 3 H2O + H(+). Its pathway is cofactor biosynthesis; pyridoxal 5'-phosphate biosynthesis. Functionally, catalyzes the formation of pyridoxal 5'-phosphate from ribose 5-phosphate (RBP), glyceraldehyde 3-phosphate (G3P) and ammonia. The ammonia is provided by the PdxT subunit. Can also use ribulose 5-phosphate and dihydroxyacetone phosphate as substrates, resulting from enzyme-catalyzed isomerization of RBP and G3P, respectively. The protein is Pyridoxal 5'-phosphate synthase subunit PdxS of Corynebacterium glutamicum (strain ATCC 13032 / DSM 20300 / JCM 1318 / BCRC 11384 / CCUG 27702 / LMG 3730 / NBRC 12168 / NCIMB 10025 / NRRL B-2784 / 534).